The sequence spans 945 residues: Isoleucine--tRNA ligase (945 aa).

A 'HIGH' region motif is present at residues 66-76 (PYANGDIHLGH). E581 is a binding site for L-isoleucyl-5'-AMP. A 'KMSKS' region motif is present at residues 622–626 (KMSKS). K625 contacts ATP. The Zn(2+) site is built by C908, C911, C928, and C931.

Belongs to the class-I aminoacyl-tRNA synthetase family. IleS type 1 subfamily. Monomer. Zn(2+) serves as cofactor.

The protein localises to the cytoplasm. The enzyme catalyses tRNA(Ile) + L-isoleucine + ATP = L-isoleucyl-tRNA(Ile) + AMP + diphosphate. Functionally, catalyzes the attachment of isoleucine to tRNA(Ile). As IleRS can inadvertently accommodate and process structurally similar amino acids such as valine, to avoid such errors it has two additional distinct tRNA(Ile)-dependent editing activities. One activity is designated as 'pretransfer' editing and involves the hydrolysis of activated Val-AMP. The other activity is designated 'posttransfer' editing and involves deacylation of mischarged Val-tRNA(Ile). This chain is Isoleucine--tRNA ligase, found in Burkholderia cenocepacia (strain ATCC BAA-245 / DSM 16553 / LMG 16656 / NCTC 13227 / J2315 / CF5610) (Burkholderia cepacia (strain J2315)).